Reading from the N-terminus, the 455-residue chain is Alpha-1,3/1,6-mannosyltransferase ALG2 (455 aa).

The chain crosses the membrane as a helical span at residues 73–95 (FGRFYILCAILRQFVLVASLILW). Asn-138 carries an N-linked (GlcNAc...) asparagine glycan. Residues 434-453 (GAVYLLGAIGVLFACIIYCI) form a helical membrane-spanning segment.

Belongs to the glycosyltransferase group 1 family. Glycosyltransferase 4 subfamily.

Its subcellular location is the endoplasmic reticulum membrane. It carries out the reaction a beta-D-Man-(1-&gt;4)-beta-D-GlcNAc-(1-&gt;4)-alpha-D-GlcNAc-diphospho-di-trans,poly-cis-dolichol + GDP-alpha-D-mannose = an alpha-D-Man-(1-&gt;3)-beta-D-Man-(1-&gt;4)-beta-D-GlcNAc-(1-&gt;4)-alpha-D-GlcNAc-diphospho-di-trans,poly-cis-dolichol + GDP + H(+). The catalysed reaction is an alpha-D-Man-(1-&gt;3)-beta-D-Man-(1-&gt;4)-beta-D-GlcNAc-(1-&gt;4)-alpha-D-GlcNAc-diphospho-di-trans,poly-cis-dolichol + GDP-alpha-D-mannose = an alpha-D-Man-(1-&gt;3)-[alpha-D-Man-(1-&gt;6)]-beta-D-Man-(1-&gt;4)-beta-D-GlcNAc-(1-&gt;4)-alpha-D-GlcNAc-diphospho-di-trans,poly-cis-dolichol + GDP + H(+). It functions in the pathway protein modification; protein glycosylation. Functionally, mannosylates Man(2)GlcNAc(2)-dolichol diphosphate and Man(1)GlcNAc(2)-dolichol diphosphate to form Man(3)GlcNAc(2)-dolichol diphosphate. The sequence is that of Alpha-1,3/1,6-mannosyltransferase ALG2 (ALG2) from Rhizomucor pusillus.